The following is a 652-amino-acid chain: MSNRRQTRAQAQQFIDTLTPLQHPNSEKVYLTGSREDLRVGMRQILQSDTLVGGTEADPILESNPPLKVYDCAGPYSDPDAEINVRAGLNKFRQSWIEERADTEQLAGVSSGFTQQRLADDGLDHLRFDSLLPPRRAQSGKRVTQLHYARNGIITPEMEYIAIRENMEQAGITDPVLRQKAKGESFGASIEQVITPEFVRQEVARGRAIIPLNINHPEAEPMIIGRNFLVKVNANIGNSAVTSSIEEEVEKLVWSTRWGADTVMDLSTGRYIHETREWIIRNSPVPIGTVPIYQALEKVNGVAEDLSWEVFRDTLVEQAEQGVDYFTIHAGVLLRYVPMTAKRVTGIVSRGGSIMAKWCLSHHSENFLYEHFTEICELCAAYDVSLSLGDGMRPGSIADANDEAQFSELETLGELVKIAWEYDVQTIIEGPGHIPMNLIKENMDKQLALCDEAPFYTLGPQTTDIAPGYDHFTSGIGAAMIAWYGCAMLCYVTPKEHLGLPNKEDVKQGLIAYKIAAHAGDVAKGHPTAQIRDNALSKARFEFRWEDQYNLGLDPETARAYHDESLPQESAKVAHFCSMCGPKFCSMKISQEVRDYAASQEVELQSHASYQAKSASEIETGMAQMSAEFKAKGAELYHETAVVDEELADAEA.

Residues Asn235, Met264, Tyr293, His329, 349–351 (SRG), 390–393 (DGMR), and Glu429 contribute to the substrate site. His433 provides a ligand contact to Zn(2+). Residue Tyr456 participates in substrate binding. Position 497 (His497) interacts with Zn(2+). [4Fe-4S] cluster-binding residues include Cys577, Cys580, and Cys585.

It belongs to the ThiC family. As to quaternary structure, homodimer. [4Fe-4S] cluster serves as cofactor.

The catalysed reaction is 5-amino-1-(5-phospho-beta-D-ribosyl)imidazole + S-adenosyl-L-methionine = 4-amino-2-methyl-5-(phosphooxymethyl)pyrimidine + CO + 5'-deoxyadenosine + formate + L-methionine + 3 H(+). It participates in cofactor biosynthesis; thiamine diphosphate biosynthesis. Functionally, catalyzes the synthesis of the hydroxymethylpyrimidine phosphate (HMP-P) moiety of thiamine from aminoimidazole ribotide (AIR) in a radical S-adenosyl-L-methionine (SAM)-dependent reaction. The chain is Phosphomethylpyrimidine synthase from Shewanella woodyi (strain ATCC 51908 / MS32).